The following is a 273-amino-acid chain: Imidazole glycerol phosphate synthase subunit HisF (273 aa).

Residues Asp11 and Asp134 contribute to the active site.

This sequence belongs to the HisA/HisF family. In terms of assembly, heterodimer of HisH and HisF.

It localises to the cytoplasm. The enzyme catalyses 5-[(5-phospho-1-deoxy-D-ribulos-1-ylimino)methylamino]-1-(5-phospho-beta-D-ribosyl)imidazole-4-carboxamide + L-glutamine = D-erythro-1-(imidazol-4-yl)glycerol 3-phosphate + 5-amino-1-(5-phospho-beta-D-ribosyl)imidazole-4-carboxamide + L-glutamate + H(+). Its pathway is amino-acid biosynthesis; L-histidine biosynthesis; L-histidine from 5-phospho-alpha-D-ribose 1-diphosphate: step 5/9. Functionally, IGPS catalyzes the conversion of PRFAR and glutamine to IGP, AICAR and glutamate. The HisF subunit catalyzes the cyclization activity that produces IGP and AICAR from PRFAR using the ammonia provided by the HisH subunit. This chain is Imidazole glycerol phosphate synthase subunit HisF, found in Methanosarcina acetivorans (strain ATCC 35395 / DSM 2834 / JCM 12185 / C2A).